Reading from the N-terminus, the 469-residue chain is Arginine biosynthesis bifunctional protein ArgJ, chloroplastic (469 aa).

Thr213, Lys239, Thr250, Glu337, Asn464, and Thr469 together coordinate substrate. Thr250 functions as the Nucleophile in the catalytic mechanism.

Belongs to the ArgJ family. Heterodimer of an alpha and a beta chain.

The protein localises to the plastid. Its subcellular location is the chloroplast. The enzyme catalyses N(2)-acetyl-L-ornithine + L-glutamate = N-acetyl-L-glutamate + L-ornithine. The catalysed reaction is L-glutamate + acetyl-CoA = N-acetyl-L-glutamate + CoA + H(+). The protein operates within amino-acid biosynthesis; L-arginine biosynthesis; L-ornithine and N-acetyl-L-glutamate from L-glutamate and N(2)-acetyl-L-ornithine (cyclic): step 1/1. It participates in amino-acid biosynthesis; L-arginine biosynthesis; N(2)-acetyl-L-ornithine from L-glutamate: step 1/4. Catalyzes two activities which are involved in the cyclic version of arginine biosynthesis: the synthesis of acetylglutamate from glutamate and acetyl-CoA, and of ornithine by transacetylation between acetylornithine and glutamate. In Ricinus communis (Castor bean), this protein is Arginine biosynthesis bifunctional protein ArgJ, chloroplastic.